The chain runs to 184 residues: UPF0398 protein BCB4264_A1614 (184 aa).

This sequence belongs to the UPF0398 family.

The chain is UPF0398 protein BCB4264_A1614 from Bacillus cereus (strain B4264).